The following is a 422-amino-acid chain: MKLEIKCFIICKVLPLVWLNMAQIQQVGAPEEKEKTTALKDLLSRIDLDELMKKDEPPLEFPDTLEGFNYAFNELGQLRHIQTGDPFVFNYREDLHRWNQKRYEALGEIITKHVYELLEKDCELEKVYLPVDATDSEPRSFIFMSKDAMTNPDKMLVLIHGSGVVRAGQWARRLIINEDLNSGSQIPYIKRAMKEGYAVIVLNPNENYIEVEKSKVPADQPSPDSSDEPAEKRERRERNPKETKKRRDFYEKYRNPQKEKETLQVYIRDNGSPEEHALYVWDNFISKAAAENILFVAHSYGGLTFVELMIQREADVKNKVAAVALTDSVHNVWHQDASKTLREWMRENCCNWVSSSEPLDTSVESTLPDCPRVSAGTERHELTSWKSFHSIFKFFDDALQAKNTKTKPTPTRRSNRIKHEDL.

Residues Met1–Leu19 form the signal peptide. Positions Lys213 to Tyr253 are disordered. Over residues Pro229–Glu242 the composition is skewed to basic and acidic residues. Residue Ser299 is the Nucleophile of the active site. The tract at residues Asn403 to Leu422 is disordered.

The protein belongs to the ARB2A family.

Its subcellular location is the nucleus. The protein resides in the cytoplasm. May play role in the regulation of alternative splicing. May have hydrolase activity. This chain is Cotranscriptional regulator ARB2A homolog (arb2a), found in Xenopus tropicalis (Western clawed frog).